The chain runs to 82 residues: Small ribosomal subunit protein bS16 (82 aa).

It belongs to the bacterial ribosomal protein bS16 family.

This Histophilus somni (strain 2336) (Haemophilus somnus) protein is Small ribosomal subunit protein bS16.